A 316-amino-acid polypeptide reads, in one-letter code: Biotin synthase (316 aa).

One can recognise a Radical SAM core domain in the interval 36-264; it reads FDNRITLCAI…TATLRICGGR (229 aa). Residues C53, C57, and C60 each contribute to the [4Fe-4S] cluster site. C129, C189, and R259 together coordinate [2Fe-2S] cluster.

This sequence belongs to the radical SAM superfamily. Biotin synthase family. Homodimer. Requires [4Fe-4S] cluster as cofactor. [2Fe-2S] cluster is required as a cofactor.

It carries out the reaction (4R,5S)-dethiobiotin + (sulfur carrier)-SH + 2 reduced [2Fe-2S]-[ferredoxin] + 2 S-adenosyl-L-methionine = (sulfur carrier)-H + biotin + 2 5'-deoxyadenosine + 2 L-methionine + 2 oxidized [2Fe-2S]-[ferredoxin]. Its pathway is cofactor biosynthesis; biotin biosynthesis; biotin from 7,8-diaminononanoate: step 2/2. Functionally, catalyzes the conversion of dethiobiotin (DTB) to biotin by the insertion of a sulfur atom into dethiobiotin via a radical-based mechanism. The sequence is that of Biotin synthase from Desulfovibrio desulfuricans (strain ATCC 27774 / DSM 6949 / MB).